Consider the following 354-residue polypeptide: Ferrochelatase (354 aa).

The Fe cation site is built by His-204 and Glu-306.

It belongs to the ferrochelatase family.

Its subcellular location is the cytoplasm. It carries out the reaction heme b + 2 H(+) = protoporphyrin IX + Fe(2+). It functions in the pathway porphyrin-containing compound metabolism; protoheme biosynthesis; protoheme from protoporphyrin-IX: step 1/1. Catalyzes the ferrous insertion into protoporphyrin IX. The protein is Ferrochelatase of Coxiella burnetii (strain CbuG_Q212) (Coxiella burnetii (strain Q212)).